Reading from the N-terminus, the 348-residue chain is Protein arginine N-methyltransferase 1 (348 aa).

In terms of domain architecture, SAM-dependent MTase PRMT-type spans 20–322; that stretch reads EQHYFNSYDH…EKNNRDLNIK (303 aa). H33, R42, G66, D88, and E117 together coordinate S-adenosyl-L-methionine. Active-site residues include E132 and E141.

It belongs to the class I-like SAM-binding methyltransferase superfamily. Protein arginine N-methyltransferase family. Homodimer. The dimers can then associate to form a ring-shaped homohexamer. Interacts with NPL3, BRE5, MTR4, SNF2, SUM1, and SSD1.

The protein resides in the nucleus. It carries out the reaction L-arginyl-[protein] + S-adenosyl-L-methionine = N(omega)-methyl-L-arginyl-[protein] + S-adenosyl-L-homocysteine + H(+). It catalyses the reaction L-arginyl-[protein] + 2 S-adenosyl-L-methionine = N(omega),N(omega)-dimethyl-L-arginyl-[protein] + 2 S-adenosyl-L-homocysteine + 2 H(+). S-adenosyl-L-methionine-dependent protein-arginine N-methyltransferase that catalyzes both the mono- and asymmetric (type I) dimethylation of the guanidino nitrogens of arginine residues in a variety of RNA-binding proteins such as heterogeneous nuclear ribonucleoproteins (hnRNPs) and small nuclear ribonucleoproteins (snRNPs). Methylates NAB2, NPL3, HRP1 and YRA1, shuttling hnRNPs involved in mRNA processing and export, facilitating their export out of the nucleus. Methylation of NPL3 weakens its interaction with THO2, a component of the TREX (transcription/export) complex important for transcriptional elongation and recruitment of mRNA export factors. Methylates the hnRNP HRB1, but does not influence its subcellular location. Methylates the nucleolar proteins GAR1, NOP1 and NSR1. Methylates the snRNP SNP1 and modulates the cotranscriptional recruitment of splicing factors. Dimethylates free histone H4 (HHF1/HHF2) at 'Arg-4' (H4R3me2a) and plays a role in preservation and establishment of silent chromatin domains. Mono- and dimethylates ribosomal protein S2 (RPS2) at 'Arg-11'. Methylates the catalytic subunit of the SWI/SNF chromatin-remodeling complex SNF2. In Saccharomyces cerevisiae (strain ATCC 204508 / S288c) (Baker's yeast), this protein is Protein arginine N-methyltransferase 1.